The primary structure comprises 273 residues: Karrikin insensitive 2 receptor B (273 aa).

The active-site Nucleophile is the Ser95. Asp217 is a catalytic residue.

This sequence belongs to the AB hydrolase superfamily. In terms of tissue distribution, expressed in stigma.

Its subcellular location is the nucleus. The protein localises to the cytoplasm. In terms of biological role, may be involved in plant olfaction during volatile communication. The polypeptide is Karrikin insensitive 2 receptor B (Petunia hybrida (Petunia)).